A 246-amino-acid polypeptide reads, in one-letter code: Caffeoyl-CoA O-methyltransferase 1 (246 aa).

Lysine 21 serves as a coordination point for substrate. S-adenosyl-L-methionine-binding positions include threonine 63, glutamate 85, 87–88 (GV), serine 93, aspartate 111, and alanine 140. Substrate is bound at residue aspartate 162. Aspartate 162 provides a ligand contact to a divalent metal cation. Aspartate 164 is an S-adenosyl-L-methionine binding site. A divalent metal cation is bound by residues aspartate 188 and asparagine 189. Asparagine 193 serves as a coordination point for substrate.

This sequence belongs to the class I-like SAM-binding methyltransferase superfamily. Cation-dependent O-methyltransferase family. CCoAMT subfamily. Requires a divalent metal cation as cofactor.

The enzyme catalyses (E)-caffeoyl-CoA + S-adenosyl-L-methionine = (E)-feruloyl-CoA + S-adenosyl-L-homocysteine + H(+). It functions in the pathway aromatic compound metabolism; phenylpropanoid biosynthesis. Methylates caffeoyl-CoA to feruloyl-CoA and 5-hydroxyferuloyl-CoA to sinapoyl-CoA. Plays a role in the synthesis of feruloylated polysaccharides. Involved in the reinforcement of the plant cell wall. Also involved in the responding to wounding or pathogen challenge by the increased formation of cell wall-bound ferulic acid polymers. The chain is Caffeoyl-CoA O-methyltransferase 1 (CCOMT) from Eucalyptus globulus (Tasmanian blue gum).